The following is a 147-amino-acid chain: Cyanate hydratase (147 aa).

Residues Arg88, Glu91, and Ser114 contribute to the active site.

Belongs to the cyanase family.

It catalyses the reaction cyanate + hydrogencarbonate + 3 H(+) = NH4(+) + 2 CO2. Functionally, catalyzes the reaction of cyanate with bicarbonate to produce ammonia and carbon dioxide. This chain is Cyanate hydratase, found in Parasynechococcus marenigrum (strain WH8102).